Here is a 72-residue protein sequence, read N- to C-terminus: Translation initiation factor IF-1 2 (72 aa).

The S1-like domain maps to 1–72 (MAKEDAIEVD…KRGRITYRMK (72 aa)).

This sequence belongs to the IF-1 family. Component of the 30S ribosomal translation pre-initiation complex which assembles on the 30S ribosome in the order IF-2 and IF-3, IF-1 and N-formylmethionyl-tRNA(fMet); mRNA recruitment can occur at any time during PIC assembly.

The protein resides in the cytoplasm. In terms of biological role, one of the essential components for the initiation of protein synthesis. Stabilizes the binding of IF-2 and IF-3 on the 30S subunit to which N-formylmethionyl-tRNA(fMet) subsequently binds. Helps modulate mRNA selection, yielding the 30S pre-initiation complex (PIC). Upon addition of the 50S ribosomal subunit IF-1, IF-2 and IF-3 are released leaving the mature 70S translation initiation complex. In Nitratidesulfovibrio vulgaris (strain DP4) (Desulfovibrio vulgaris), this protein is Translation initiation factor IF-1 2.